We begin with the raw amino-acid sequence, 408 residues long: Subtilisin-like protease 6 (408 aa).

An N-terminal signal peptide occupies residues 1–20 (MGFITKAIPIVLAALSTVDG). Positions 21–123 (AKILEAGPHA…RDTVVKATAI (103 aa)) are excised as a propeptide. The region spanning 36–119 (KYIVVMKQDV…DFIERDTVVK (84 aa)) is the Inhibitor I9 domain. In terms of domain architecture, Peptidase S8 spans 131–408 (SWGLARVGSK…GKLIYNGSGK (278 aa)). Active-site charge relay system residues include D163 and H194. N248, N260, and N345 each carry an N-linked (GlcNAc...) asparagine glycan. Residue S354 is the Charge relay system of the active site. Residue N404 is glycosylated (N-linked (GlcNAc...) asparagine).

Belongs to the peptidase S8 family.

It localises to the secreted. Secreted subtilisin-like serine protease with keratinolytic activity that contributes to pathogenicity. The polypeptide is Subtilisin-like protease 6 (SUB6) (Arthroderma gypseum (strain ATCC MYA-4604 / CBS 118893) (Microsporum gypseum)).